The primary structure comprises 448 residues: Phosphoglucosamine mutase (448 aa).

Serine 100 (phosphoserine intermediate) is an active-site residue. Residues serine 100, aspartate 240, aspartate 242, and aspartate 244 each coordinate Mg(2+). Serine 100 is modified (phosphoserine).

It belongs to the phosphohexose mutase family. The cofactor is Mg(2+). Post-translationally, activated by phosphorylation.

It catalyses the reaction alpha-D-glucosamine 1-phosphate = D-glucosamine 6-phosphate. Functionally, catalyzes the conversion of glucosamine-6-phosphate to glucosamine-1-phosphate. The polypeptide is Phosphoglucosamine mutase (Clostridium perfringens (strain ATCC 13124 / DSM 756 / JCM 1290 / NCIMB 6125 / NCTC 8237 / Type A)).